We begin with the raw amino-acid sequence, 412 residues long: Peptidase T (412 aa).

His78 lines the Zn(2+) pocket. Asp80 is an active-site residue. Zn(2+) is bound at residue Asp140. Catalysis depends on Glu173, which acts as the Proton acceptor. Residues Glu174, Asp196, and His379 each contribute to the Zn(2+) site.

It belongs to the peptidase M20B family. Zn(2+) serves as cofactor.

The protein localises to the cytoplasm. The catalysed reaction is Release of the N-terminal residue from a tripeptide.. Functionally, cleaves the N-terminal amino acid of tripeptides. This Edwardsiella ictaluri (strain 93-146) protein is Peptidase T.